Here is a 430-residue protein sequence, read N- to C-terminus: Trigger factor (430 aa).

The PPIase FKBP-type domain occupies 163–248 (GDVVDVDYKG…LNSIKTSILP (86 aa)).

The protein belongs to the FKBP-type PPIase family. Tig subfamily.

It localises to the cytoplasm. It catalyses the reaction [protein]-peptidylproline (omega=180) = [protein]-peptidylproline (omega=0). Involved in protein export. Acts as a chaperone by maintaining the newly synthesized protein in an open conformation. Functions as a peptidyl-prolyl cis-trans isomerase. In Lawsonia intracellularis (strain PHE/MN1-00), this protein is Trigger factor.